The primary structure comprises 1368 residues: MAYSFTEKKRIRKSFAKRATVHQVPFLLATQIESYTQFLQAETPPARRKSEGLQAAFNAIFPISSHNGLARMEFVSYHLSNPPFDVKECQQRGLTFHSALRAKVRLIINDRENPGKVKEVKEQEVYMGEIPLMTSTGSFVINGTERVIVSQLHRSPGVFFEHDKGKTHSSGKLLFSARIIPYRGSWLDFEFDPKDILYFRVDRRRKMPVTILLKSIGLTPEQILAHFFVFDNFTLQSEGAQLEFVPERLRGEVARFDIVDKNGRVVVEKDKRINAKHIRDLDSAGTKLISVPEDYLLGRVLAKNIIDPDTGEVIANANDELTETLLENLREAGVKDIQTLYTNDLDQGPYISQTLRADDTADQTAARIAIYRMMRPGEPPTEDAVEALFQRLFYSEESYDLSRVGRMKVNSRLSRPSGEGSMVLQDEDILETIKILVNLRNGKGEVDDIDHLGNRRVRCVGELAENQFRAGLSRVERAVKERLGQAETENLMPHDLINSKPISSAIREFFGSSQLSQFMDQTNPLSEITHKRRVSALGPGGLTRERAGFEVRDVHPTHYGRVCPIETPEGPNIGLINSLALYARLNEYGFLETPYRKVENSKLTDQVDYLSAIEEGKYVVAQANATVDAEGNLIDELVSAREGSERETRMVTPDRVQYIDVAPSQIVSAAASLVPFLEHDDANRALMGANMQRQAVPCLRPDKPLVGTGIERTVAVDSGTAVQATRGGVVDYVDAMRVVIRVNDDEAVAGEVGVDIYNLIKYTRSNQNTNINQRPMVKVGDIVARGDVIADGASTDLGELALGQNMLVAFMPWNGYNFEDSILISERVVAEDRYTSIHIEELSVVARDTKLGPEEITRDISNLAEAQLARLDESGITYIGAEVEAGDVLVGKVTPKGETQLTPEEKLLRAIFGEKASDVKDTSLRVPSGMSGIVIDVQVFTREGVTRDKRAQSIIDDELKRYRLDLNDQLRIVEGDAFQRLERMLLDKTVNGGPKKLAKGAKLTREYLADLDKYHWFDIRPADEEVAAQLEAVKEAIEQKRHEFDLAFEEKRKKLTQGDELPPGVIKMVKVYLAVKRRLQPGDKMAGRHGNKGVVSKIVPIEDMPYMADGTPADIVLNPLGVPSRMNVGQILETHLGWAARGLGQRIGDMLKASAKAQELRPLLAQIYNESGKAEDLDSLSDAEVLELAGNLKKGVPFATPVFDGAHEAEIRRMLDLAYPDDIAKERGLTASKQQVTLHDGRTGEAFERPVTLGVMHMLKLHHLVDDKMHARSTGPYSLVTQQPLGGKAQFGGQRFGEMEVWALEAYGASYVLQEMLTVKSDDVNGRTKVYENIVKGEHSIDAGMPESFNVLVKEIRSLGIDIDLDRY.

The protein belongs to the RNA polymerase beta chain family. As to quaternary structure, the RNAP catalytic core consists of 2 alpha, 1 beta, 1 beta' and 1 omega subunit. When a sigma factor is associated with the core the holoenzyme is formed, which can initiate transcription.

It carries out the reaction RNA(n) + a ribonucleoside 5'-triphosphate = RNA(n+1) + diphosphate. Its function is as follows. DNA-dependent RNA polymerase catalyzes the transcription of DNA into RNA using the four ribonucleoside triphosphates as substrates. In Cupriavidus metallidurans (strain ATCC 43123 / DSM 2839 / NBRC 102507 / CH34) (Ralstonia metallidurans), this protein is DNA-directed RNA polymerase subunit beta.